A 2724-amino-acid polypeptide reads, in one-letter code: Eukaryotic translation initiation factor 2-alpha kinase 2 (2724 aa).

Residues Met-1–Asn-24 are Cytoplasmic-facing. Residues Gly-25–Val-45 form a helical membrane-spanning segment. The Extracellular segment spans residues Tyr-46–Lys-673. Positions Lys-112–Arg-153 are disordered. Over residues Lys-120–Gln-146 the composition is skewed to basic and acidic residues. Residues Thr-674 to Glu-694 form a helical membrane-spanning segment. The Cytoplasmic portion of the chain corresponds to Lys-695–Arg-718. Residues Ile-719–Phe-739 form a helical membrane-spanning segment. The Extracellular segment spans residues Glu-740 to Glu-800. The helical transmembrane segment at Leu-801–Ile-821 threads the bilayer. The Cytoplasmic segment spans residues Tyr-822–Gln-832. Residues Phe-833–Tyr-853 traverse the membrane as a helical segment. Topologically, residues Asp-854–Tyr-876 are extracellular. A helical membrane pass occupies residues Val-877 to Ile-897. Residues Arg-898–Asn-908 are Cytoplasmic-facing. A helical membrane pass occupies residues Tyr-909 to Leu-929. Residues Thr-930 to Tyr-996 are Extracellular-facing. The helical transmembrane segment at Ala-997–Ile-1017 threads the bilayer. The Cytoplasmic portion of the chain corresponds to Arg-1018–Pro-2724. Lys-2029 is a binding site for ATP. Residues Lys-2084–Leu-2719 enclose the Protein kinase domain. A coiled-coil region spans residues Ile-2120–Lys-2155. Asp-2229 serves as the catalytic Proton acceptor. Positions Glu-2479–Asn-2507 are disordered. Residues Ala-2488–Gly-2502 show a composition bias toward basic residues.

Belongs to the protein kinase superfamily. Ser/Thr protein kinase family. GCN2 subfamily. Post-translationally, auto-phosphorylated.

Its subcellular location is the membrane. The catalysed reaction is L-seryl-[protein] + ATP = O-phospho-L-seryl-[protein] + ADP + H(+). It catalyses the reaction L-threonyl-[protein] + ATP = O-phospho-L-threonyl-[protein] + ADP + H(+). Phosphorylates translation factor eIF2alpha in salivary gland sporozoites during dormancy, which leads to an inhibition of protein translation and accumulation of stalled mRNAs into granules. The protein is Eukaryotic translation initiation factor 2-alpha kinase 2 of Plasmodium berghei (strain Anka).